The primary structure comprises 236 residues: Phosphoribosylaminoimidazole-succinocarboxamide synthase (236 aa).

Belongs to the SAICAR synthetase family.

The catalysed reaction is 5-amino-1-(5-phospho-D-ribosyl)imidazole-4-carboxylate + L-aspartate + ATP = (2S)-2-[5-amino-1-(5-phospho-beta-D-ribosyl)imidazole-4-carboxamido]succinate + ADP + phosphate + 2 H(+). The protein operates within purine metabolism; IMP biosynthesis via de novo pathway; 5-amino-1-(5-phospho-D-ribosyl)imidazole-4-carboxamide from 5-amino-1-(5-phospho-D-ribosyl)imidazole-4-carboxylate: step 1/2. The chain is Phosphoribosylaminoimidazole-succinocarboxamide synthase from Campylobacter jejuni subsp. jejuni serotype O:6 (strain 81116 / NCTC 11828).